We begin with the raw amino-acid sequence, 493 residues long: Probable mannosyl-oligosaccharide alpha-1,2-mannosidase 1B (493 aa).

Residues 1 to 18 (MHLPSLSVALALVSSSLA) form the signal peptide. Asn87 and Asn174 each carry an N-linked (GlcNAc...) asparagine glycan. Cys324 and Cys353 are oxidised to a cystine. Glu367 (proton donor) is an active-site residue. The N-linked (GlcNAc...) asparagine glycan is linked to Asn489.

It belongs to the glycosyl hydrolase 47 family. In terms of assembly, monomer. The cofactor is Ca(2+). Mg(2+) serves as cofactor.

The protein localises to the cytoplasmic vesicle lumen. It carries out the reaction N(4)-(alpha-D-Man-(1-&gt;2)-alpha-D-Man-(1-&gt;2)-alpha-D-Man-(1-&gt;3)-[alpha-D-Man-(1-&gt;2)-alpha-D-Man-(1-&gt;3)-[alpha-D-Man-(1-&gt;2)-alpha-D-Man-(1-&gt;6)]-alpha-D-Man-(1-&gt;6)]-beta-D-Man-(1-&gt;4)-beta-D-GlcNAc-(1-&gt;4)-beta-D-GlcNAc)-L-asparaginyl-[protein] (N-glucan mannose isomer 9A1,2,3B1,2,3) + 4 H2O = N(4)-(alpha-D-Man-(1-&gt;3)-[alpha-D-Man-(1-&gt;3)-[alpha-D-Man-(1-&gt;6)]-alpha-D-Man-(1-&gt;6)]-beta-D-Man-(1-&gt;4)-beta-D-GlcNAc-(1-&gt;4)-beta-D-GlcNAc)-L-asparaginyl-[protein] (N-glucan mannose isomer 5A1,2) + 4 beta-D-mannose. The catalysed reaction is N(4)-(alpha-D-Man-(1-&gt;2)-alpha-D-Man-(1-&gt;2)-alpha-D-Man-(1-&gt;3)-[alpha-D-Man-(1-&gt;3)-[alpha-D-Man-(1-&gt;2)-alpha-D-Man-(1-&gt;6)]-alpha-D-Man-(1-&gt;6)]-beta-D-Man-(1-&gt;4)-beta-D-GlcNAc-(1-&gt;4)-beta-D-GlcNAc)-L-asparaginyl-[protein] (N-glucan mannose isomer 8A1,2,3B1,3) + 3 H2O = N(4)-(alpha-D-Man-(1-&gt;3)-[alpha-D-Man-(1-&gt;3)-[alpha-D-Man-(1-&gt;6)]-alpha-D-Man-(1-&gt;6)]-beta-D-Man-(1-&gt;4)-beta-D-GlcNAc-(1-&gt;4)-beta-D-GlcNAc)-L-asparaginyl-[protein] (N-glucan mannose isomer 5A1,2) + 3 beta-D-mannose. The protein operates within protein modification; protein glycosylation. Involved in the maturation of Asn-linked oligosaccharides. Progressively trims alpha-1,2-linked mannose residues from Man(9)GlcNAc(2) to produce Man(5)GlcNAc(2). The protein is Probable mannosyl-oligosaccharide alpha-1,2-mannosidase 1B (mns1B) of Aspergillus fumigatus (strain CBS 144.89 / FGSC A1163 / CEA10) (Neosartorya fumigata).